The chain runs to 348 residues: Protein arginine N-methyltransferase 1 (348 aa).

One can recognise an SAM-dependent MTase PRMT-type domain in the interval 20–322 (EQHYFNSYDH…EKNNRDLNIK (303 aa)). Residues His-33, Arg-42, Gly-66, Asp-88, and Glu-117 each coordinate S-adenosyl-L-methionine. Catalysis depends on residues Glu-132 and Glu-141.

Belongs to the class I-like SAM-binding methyltransferase superfamily. Protein arginine N-methyltransferase family. In terms of assembly, homodimer. The dimers can then associate to form a ring-shaped homohexamer. Interacts with NPL3, BRE5, MTR4, SNF2, SUM1, and SSD1.

It localises to the nucleus. It carries out the reaction L-arginyl-[protein] + S-adenosyl-L-methionine = N(omega)-methyl-L-arginyl-[protein] + S-adenosyl-L-homocysteine + H(+). It catalyses the reaction L-arginyl-[protein] + 2 S-adenosyl-L-methionine = N(omega),N(omega)-dimethyl-L-arginyl-[protein] + 2 S-adenosyl-L-homocysteine + 2 H(+). Functionally, S-adenosyl-L-methionine-dependent protein-arginine N-methyltransferase that catalyzes both the mono- and asymmetric (type I) dimethylation of the guanidino nitrogens of arginine residues in a variety of RNA-binding proteins such as heterogeneous nuclear ribonucleoproteins (hnRNPs) and small nuclear ribonucleoproteins (snRNPs). Methylates NAB2, NPL3, HRP1 and YRA1, shuttling hnRNPs involved in mRNA processing and export, facilitating their export out of the nucleus. Methylation of NPL3 weakens its interaction with THO2, a component of the TREX (transcription/export) complex important for transcriptional elongation and recruitment of mRNA export factors. Methylates the hnRNP HRB1, but does not influence its subcellular location. Methylates the nucleolar proteins GAR1, NOP1 and NSR1. Methylates the snRNP SNP1 and modulates the cotranscriptional recruitment of splicing factors. Dimethylates free histone H4 (HHF1/HHF2) at 'Arg-4' (H4R3me2a) and plays a role in preservation and establishment of silent chromatin domains. Mono- and dimethylates ribosomal protein S2 (RPS2) at 'Arg-11'. Methylates the catalytic subunit of the SWI/SNF chromatin-remodeling complex SNF2. This Saccharomyces cerevisiae (strain ATCC 204508 / S288c) (Baker's yeast) protein is Protein arginine N-methyltransferase 1.